We begin with the raw amino-acid sequence, 605 residues long: Kelch-like protein 26 (605 aa).

The BTB domain maps to 53–120 (LDVVLAIDNE…AYSSEVTLDL (68 aa)). A BACK domain is found at 155–256 (CLNIGQMATT…RSSELVDSVQ (102 aa)). 6 Kelch repeats span residues 300–351 (SLIT…VLDN), 352–403 (FVYV…VLDG), 404–450 (QLYA…TCGD), 452–498 (LYIS…SANN), 499–549 (RIYA…LLDK), and 551–598 (IYIV…PIIL).

Functionally, may play a role in endo(sarco)plasmic reticulum (ER/SR) mitochondrial signaling. May be part of the ubiquitin-proteasome system (UPS) and affect ubiquitination and degradation of target substrates. The polypeptide is Kelch-like protein 26 (klhl26) (Danio rerio (Zebrafish)).